We begin with the raw amino-acid sequence, 62 residues long: Enterocin E-760 (62 aa).

The protein localises to the secreted. Functionally, bacteriocin active against the Gram-negative bacteria S.enteritidis, S.choleraesuis, S.typhimurium, S.gallinarum, E.coli O157:H7, Y.enterocolitica, C.freundii, K.pneumoniae, S.dysentriae, P.aeruginosa, P.mirabilis, M.morganii, C.jejuni and 20 other Campylobacter isolates, and the Gram-positive bacteria S.aureus, S.epidermidis and L.monocytogenes. The polypeptide is Enterocin E-760 (Enterococcus sp).